A 448-amino-acid chain; its full sequence is Phosphoglucosamine mutase (448 aa).

S100 (phosphoserine intermediate) is an active-site residue. 4 residues coordinate Mg(2+): S100, D240, D242, and D244. S100 is modified (phosphoserine).

It belongs to the phosphohexose mutase family. Mg(2+) is required as a cofactor. Activated by phosphorylation.

It catalyses the reaction alpha-D-glucosamine 1-phosphate = D-glucosamine 6-phosphate. In terms of biological role, catalyzes the conversion of glucosamine-6-phosphate to glucosamine-1-phosphate. The polypeptide is Phosphoglucosamine mutase (Clostridium perfringens (strain SM101 / Type A)).